The primary structure comprises 295 residues: UDP-N-acetylenolpyruvoylglucosamine reductase (295 aa).

An FAD-binding PCMH-type domain is found at Gln-23–Gly-188. Residue Arg-167 is part of the active site. The active-site Proton donor is Ser-217. The active site involves Glu-287.

The protein belongs to the MurB family. FAD is required as a cofactor.

The protein resides in the cytoplasm. It catalyses the reaction UDP-N-acetyl-alpha-D-muramate + NADP(+) = UDP-N-acetyl-3-O-(1-carboxyvinyl)-alpha-D-glucosamine + NADPH + H(+). It participates in cell wall biogenesis; peptidoglycan biosynthesis. Cell wall formation. This chain is UDP-N-acetylenolpyruvoylglucosamine reductase, found in Streptococcus equi subsp. zooepidemicus (strain H70).